A 183-amino-acid chain; its full sequence is Capsid protein (183 aa).

A disordered region spans residues 143-183 (LPENAVVRRRGRSPRRRTPSPRRRRSQSPRRRRSQSRGSQC). A compositionally biased stretch (basic residues) spans 149–177 (VRRRGRSPRRRTPSPRRRRSQSPRRRRSQ). 3 positions are modified to phosphoserine; by host: serine 155, serine 162, and serine 170. A 1; half-length repeat occupies 155–161 (SPRRRTP). Residues 155–177 (SPRRRTPSPRRRRSQSPRRRRSQ) form a 3 X 8 AA repeats of S-P-R-R-R-[PR]-S-Q region. Positions 158–175 (RRTPSPRRRRSQSPRRRR) match the Bipartite nuclear localization signal motif. 2 repeat units span residues 162-169 (SPRRRRSQ) and 170-177 (SPRRRRSQ). The segment at 177 to 183 (QSRGSQC) is RNA binding.

It belongs to the orthohepadnavirus core antigen family. In terms of assembly, homodimerizes, then multimerizes. Interacts with cytosol exposed regions of viral L glycoprotein present in the reticulum-to-Golgi compartment. Interacts with human FLNB. Phosphorylated form interacts with host importin alpha; this interaction depends on the exposure of the NLS, which itself depends upon genome maturation and/or phosphorylation of the capsid protein. Interacts with host NUP153. Phosphorylated by host SRPK1, SRPK2, and maybe protein kinase C or GAPDH. Phosphorylation is critical for pregenomic RNA packaging. Protein kinase C phosphorylation is stimulated by HBx protein and may play a role in transport of the viral genome to the nucleus at the late step during the viral replication cycle.

Its subcellular location is the virion. The protein resides in the host cytoplasm. Its function is as follows. Self assembles to form an icosahedral capsid. Most capsids appear to be large particles with an icosahedral symmetry of T=4 and consist of 240 copies of capsid protein, though a fraction forms smaller T=3 particles consisting of 180 capsid proteins. Entering capsids are transported along microtubules to the nucleus. Phosphorylation of the capsid is thought to induce exposure of nuclear localization signal in the C-terminal portion of the capsid protein that allows binding to the nuclear pore complex via the importin (karyopherin-) alpha and beta. Capsids are imported in intact form through the nuclear pore into the nuclear basket, where it probably binds NUP153. Only capsids that contain the mature viral genome can release the viral DNA and capsid protein into the nucleoplasm. Immature capsids get stuck in the basket. Capsids encapsulate the pre-genomic RNA and the P protein. Pre-genomic RNA is reverse-transcribed into DNA while the capsid is still in the cytoplasm. The capsid can then either be directed to the nucleus, providing more genomes for transcription, or bud through the endoplasmic reticulum to provide new virions. The chain is Capsid protein from Homo sapiens (Human).